The following is a 399-amino-acid chain: Argininosuccinate synthase (399 aa).

Position 9-17 (9-17) interacts with ATP; sequence AYSGGLDTS. Tyr87 contributes to the L-citrulline binding site. Residue Gly117 coordinates ATP. L-aspartate-binding residues include Thr119, Asn123, and Asp124. Asn123 contributes to the L-citrulline binding site. L-citrulline-binding residues include Arg127, Ser176, Ser185, Glu261, and Tyr273.

The protein belongs to the argininosuccinate synthase family. Type 1 subfamily. Homotetramer.

The protein localises to the cytoplasm. The enzyme catalyses L-citrulline + L-aspartate + ATP = 2-(N(omega)-L-arginino)succinate + AMP + diphosphate + H(+). Its pathway is amino-acid biosynthesis; L-arginine biosynthesis; L-arginine from L-ornithine and carbamoyl phosphate: step 2/3. In Chlorobium chlorochromatii (strain CaD3), this protein is Argininosuccinate synthase.